The primary structure comprises 648 residues: Mitochondrial Rho GTPase 3 (648 aa).

Over 1–621 (MWMGVGDSSG…KRSCKLNNRS (621 aa)) the chain is Cytoplasmic. Serine 11 carries the post-translational modification Phosphoserine. Residues 12–179 (PKPIRIVVVG…LYYAQKAVID (168 aa)) enclose the Miro 1 domain. EF-hand domains are found at residues 195-230 (RCIA…CFDT) and 316-351 (VAIE…APES). Residues aspartate 208, asparagine 210, aspartate 212, glutamate 219, aspartate 329, asparagine 331, aspartate 333, asparagine 335, and glutamate 340 each coordinate Ca(2+). In terms of domain architecture, Miro 2 spans 425–599 (RKVVQCFVFG…FRKILTAAEN (175 aa)). A helical membrane pass occupies residues 622-644 (LMAVSIGTAVLIAGLASFRLYTA). The Mitochondrial intermembrane segment spans residues 645–648 (RKQS).

This sequence belongs to the mitochondrial Rho GTPase family. Expressed at very low levels in roots, leaves, stems, flowers and siliques.

It localises to the mitochondrion outer membrane. Mitochondrial GTPase that may be involved in mitochondrion development. This is Mitochondrial Rho GTPase 3 from Arabidopsis thaliana (Mouse-ear cress).